The following is an 83-amino-acid chain: Small ribosomal subunit protein bS20 (83 aa).

Positions 1 to 11 are enriched in basic residues; sequence MANHKSAAKRA. A disordered region spans residues 1 to 44; sequence MANHKSAAKRAKQSEARRLRNKSTRSSMNTAVKKVRTAKEAGTD.

Belongs to the bacterial ribosomal protein bS20 family.

Functionally, binds directly to 16S ribosomal RNA. This chain is Small ribosomal subunit protein bS20, found in Desulforapulum autotrophicum (strain ATCC 43914 / DSM 3382 / VKM B-1955 / HRM2) (Desulfobacterium autotrophicum).